Consider the following 76-residue polypeptide: Tabkunin 2 (76 aa).

A signal peptide spans 1 to 20; it reads MKVLSLIFVIFSVLVLFASA. One can recognise a BPTI/Kunitz inhibitor domain in the interval 25–75; it reads CDQPKAVGRCFAAFPKFYFNSSSGQCEAFIYGGCGGNENNFSTLEECNAKC. 3 cysteine pairs are disulfide-bonded: Cys-25–Cys-75, Cys-34–Cys-58, and Cys-50–Cys-71.

Expressed in salivary glands.

The protein localises to the secreted. In terms of biological role, potent anticoagulant protein that inhibits the hydrolytic activities of all serine proteases tested (trypsin, thrombin, elastase, and chymotrypsin), with the highest efficacy on thrombin. The protein is Tabkunin 2 of Tabanus yao (Horsefly).